The chain runs to 36 residues: Glycine-rich protein GWK (36 aa).

Positions 1 to 36 (YKRGGGGWGGGGGWKGGGGGGGGWKGGGGGGKGGGG) are disordered.

Functionally, possesses antifungal activity against a number of phytopathogenic fungi, including H.sativum and F.culmorum. The polypeptide is Glycine-rich protein GWK (Cucumis melo (Muskmelon)).